The chain runs to 757 residues: Large ribosomal subunit protein mL102 (rPPR5) (757 aa).

Residues 39–55 are compositionally biased toward polar residues; it reads EETQTPANANPETQSPD. The tract at residues 39 to 82 is disordered; the sequence is EETQTPANANPETQSPDAKSETKKNLTSTETRPLRERFQRGKRQ. Residues 70–82 show a composition bias toward basic and acidic residues; the sequence is RPLRERFQRGKRQ. PPR repeat units follow at residues 149–183, 184–218, 219–253, 254–288, 289–323, 324–358, 359–393, 395–429, 430–464, 473–507, 510–541, 542–576, 577–611, 614–648, 651–680, and 681–715; these read DRDT…GVPW, DEDM…GVER, TIKS…GVEP, TRHT…GISP, DDAT…KIGP, SVVS…GIEP, NATT…HIAP, DNSI…NVPA, EAGH…EIIL, EPSA…GVQD, ALNN…GVPR, ESNA…GHVP, DSSL…NVGI, NMDL…GHTA, DSLL…DLSL, and EFSS…GSST.

The protein belongs to the PPR family. P subfamily. In terms of assembly, component of the mitochondrial ribosome large subunit.

The protein resides in the mitochondrion. The chain is Large ribosomal subunit protein mL102 (rPPR5) from Arabidopsis thaliana (Mouse-ear cress).